We begin with the raw amino-acid sequence, 615 residues long: MIKKISLLTALSVTAFSGWAQETDNNAMVVTANRFQQPVNSVLAPTTVVTREEIDRWQAKSLTDVMRRLPGVDIGQNGGLGQKSSLFIRGTNSSHVLVLIDGIRLNQAGISGSSDLSQIPLSLVQKVEYIRGSRSAVYGSDAIGGVVNIITTREKNGTTLNAGVGSKGYQSYDAATQQALGDSTTATLAGNYVYTKGFDVVAYGTASPAQPDRDGFMSKSLYGTVEHKFGDQFSGFLRGYGYDNRTDYDNFSSVDTRQLYSQTWDTGLRYQSGIYSTQLIGSYSHSKDYDYDPLRGLHSSGSTLVDSQQYNAQWGNVLQVGAGTVSAGVDWQDQIIKPDSTSVNREESQNNTGIYLTGQQRFASIVLEGSVRGDDQSEFGWHNTWRTGASWEFIEGYSLIASYGTAFKAPNMGQLYGRFGSNRDLQPEESKQWESGVEGLTGPVIWRVSGYRNDIDNLIDATGSTGYVYENVGKAKIKGIEATASFDTGPVGHRISYDYVDSRNAITDEPLARRAKQQVKYQLDWQVYDLDWSVTYQYLGSRYDKDYGNYIPAVDDYQTVKLGGVSLWDLAASYPVTSHLTVRGRIANLFDKDYETAYGYRTAGREYYLTGSYTF.

Positions 1–20 (MIKKISLLTALSVTAFSGWA) are cleaved as a signal peptide. The TonB box motif lies at 26-33 (NAMVVTAN). One can recognise a TBDR plug domain in the interval 38 to 152 (PVNSVLAPTT…IGGVVNIITT (115 aa)). Residues Ser-85, Asn-92, and 110-111 (IS) each bind cyanocob(III)alamin. One can recognise a TBDR beta-barrel domain in the interval 155-615 (KNGTTLNAGV…EYYLTGSYTF (461 aa)). 3 beta stranded membrane passes run 158–165 (TTLNAGVG), 169–178 (YQSYDAATQQ), and 184–195 (TTATLAGNYVYT). Asp-199, Gln-210, Asp-212, and Asp-214 together coordinate Ca(2+). 2 beta stranded membrane passes run 216–226 (FMSKSLYGTVE) and 231–247 (DQFS…NRTD). Ca(2+) contacts are provided by Tyr-248, Asp-249, and Asp-255. Beta stranded transmembrane passes span 257–271 (RQLY…LRYQ), 273–290 (GIYS…KDYD), 303–319 (TLVD…NVLQ), 322–331 (AGTVSAGVDW), 347–363 (ESQN…QRFA), 365–375 (IVLEGSVRGDD), 379–394 (FGWH…WEFI), 397–411 (YSLI…KAPN), 429–438 (ESKQWESGVE), 444–453 (VIWRVSGYRN), 468–486 (VYEN…TASF), 490–505 (PVGH…SRNA), 513–525 (RRAK…QLDW), and 531–546 (DWSV…YDKD). Thr-303 contacts cyanocob(III)alamin. Cyanocob(III)alamin is bound at residue Arg-513. Tyr-547 is a cyanocob(III)alamin binding site. The next 3 beta stranded transmembrane spans lie at 559 to 573 (TVKL…LAAS), 586 to 597 (IANLFDKDYETA), and 603 to 615 (AGRE…SYTF). The short motif at 598 to 615 (YGYRTAGREYYLTGSYTF) is the TonB C-terminal box element.

It belongs to the TonB-dependent receptor family. BtuB (TC 1.B.14.3.1) subfamily.

Its subcellular location is the cell outer membrane. Functionally, involved in the active translocation of vitamin B12 (cyanocobalamin) across the outer membrane to the periplasmic space. It derives its energy for transport by interacting with the trans-periplasmic membrane protein TonB. In Pectobacterium atrosepticum (strain SCRI 1043 / ATCC BAA-672) (Erwinia carotovora subsp. atroseptica), this protein is Vitamin B12 transporter BtuB.